The following is a 313-amino-acid chain: Porphobilinogen deaminase (313 aa).

C242 is modified (S-(dipyrrolylmethanemethyl)cysteine).

It belongs to the HMBS family. In terms of assembly, monomer. Requires dipyrromethane as cofactor.

It catalyses the reaction 4 porphobilinogen + H2O = hydroxymethylbilane + 4 NH4(+). The protein operates within porphyrin-containing compound metabolism; protoporphyrin-IX biosynthesis; coproporphyrinogen-III from 5-aminolevulinate: step 2/4. Tetrapolymerization of the monopyrrole PBG into the hydroxymethylbilane pre-uroporphyrinogen in several discrete steps. This chain is Porphobilinogen deaminase, found in Escherichia fergusonii (strain ATCC 35469 / DSM 13698 / CCUG 18766 / IAM 14443 / JCM 21226 / LMG 7866 / NBRC 102419 / NCTC 12128 / CDC 0568-73).